Reading from the N-terminus, the 202-residue chain is Urease accessory protein UreE (202 aa).

A compositionally biased stretch (basic and acidic residues) spans 171–188; that stretch reads HHGHSHSHDHDHDHDHQH. Residues 171–202 form a disordered region; sequence HHGHSHSHDHDHDHDHQHGPGCTHGHRGHDHH.

The protein belongs to the UreE family.

The protein localises to the cytoplasm. Functionally, involved in urease metallocenter assembly. Binds nickel. Probably functions as a nickel donor during metallocenter assembly. The protein is Urease accessory protein UreE of Burkholderia ambifaria (strain ATCC BAA-244 / DSM 16087 / CCUG 44356 / LMG 19182 / AMMD) (Burkholderia cepacia (strain AMMD)).